A 632-amino-acid polypeptide reads, in one-letter code: 1-deoxy-D-xylulose-5-phosphate synthase (632 aa).

Thiamine diphosphate-binding positions include H73 and S114 to A116. D146 is a Mg(2+) binding site. Thiamine diphosphate-binding positions include G147–A148, N176, Y287, and E368. A Mg(2+)-binding site is contributed by N176.

It belongs to the transketolase family. DXPS subfamily. Homodimer. The cofactor is Mg(2+). Thiamine diphosphate serves as cofactor.

It carries out the reaction D-glyceraldehyde 3-phosphate + pyruvate + H(+) = 1-deoxy-D-xylulose 5-phosphate + CO2. The protein operates within metabolic intermediate biosynthesis; 1-deoxy-D-xylulose 5-phosphate biosynthesis; 1-deoxy-D-xylulose 5-phosphate from D-glyceraldehyde 3-phosphate and pyruvate: step 1/1. Catalyzes the acyloin condensation reaction between C atoms 2 and 3 of pyruvate and glyceraldehyde 3-phosphate to yield 1-deoxy-D-xylulose-5-phosphate (DXP). The polypeptide is 1-deoxy-D-xylulose-5-phosphate synthase (Corynebacterium glutamicum (strain R)).